The primary structure comprises 492 residues: N-succinylglutamate 5-semialdehyde dehydrogenase (492 aa).

NAD(+) is bound at residue 220-225 (GSASTG). Residues Glu243 and Cys277 contribute to the active site.

This sequence belongs to the aldehyde dehydrogenase family. AstD subfamily.

The enzyme catalyses N-succinyl-L-glutamate 5-semialdehyde + NAD(+) + H2O = N-succinyl-L-glutamate + NADH + 2 H(+). It functions in the pathway amino-acid degradation; L-arginine degradation via AST pathway; L-glutamate and succinate from L-arginine: step 4/5. Functionally, catalyzes the NAD-dependent reduction of succinylglutamate semialdehyde into succinylglutamate. The polypeptide is N-succinylglutamate 5-semialdehyde dehydrogenase (Salmonella heidelberg (strain SL476)).